The chain runs to 31 residues: Phospholipase A2 homolog P-elapitoxin-Aa1a beta chain (31 aa).

The protein belongs to the phospholipase A2 family. Group I subfamily. Heterotrimer of alpha, beta and gamma chains, each related to PLA2. Expressed by the venom gland.

It is found in the secreted. Heterotrimer: Snake venom phospholipase A2 (PLA2) that has presynaptic neurotoxicity. Inhibits nerve-evoked twitch contractions but not responses to cholinergic agonists acetylcholine and carbachol and to depolarizing agonist KCl. Causes a fade in tetanic contractions. Displays a triphasic mode of action with depression, enhancement and blockade of neurotransmission. Does not display myotoxic activity such as changes in baseline muscle tension or inhibition of directly stimulated muscle twitches. All subunits are necessary for maximum toxicity. Functionally, monomer: The beta chain has no enzymatic activity and is not toxic by itself. The polypeptide is Phospholipase A2 homolog P-elapitoxin-Aa1a beta chain (Acanthophis antarcticus (Common death adder)).